Reading from the N-terminus, the 368-residue chain is Flagellar P-ring protein 1 (368 aa).

An N-terminal signal peptide occupies residues 1-24; sequence MIFKQIRRLIAAALLAALSLPAAA.

Belongs to the FlgI family. The basal body constitutes a major portion of the flagellar organelle and consists of four rings (L,P,S, and M) mounted on a central rod.

The protein localises to the periplasm. It localises to the bacterial flagellum basal body. Its function is as follows. Assembles around the rod to form the L-ring and probably protects the motor/basal body from shearing forces during rotation. The chain is Flagellar P-ring protein 1 from Chromobacterium violaceum (strain ATCC 12472 / DSM 30191 / JCM 1249 / CCUG 213 / NBRC 12614 / NCIMB 9131 / NCTC 9757 / MK).